The chain runs to 142 residues: Large ribosomal subunit protein uL13 (142 aa).

It belongs to the universal ribosomal protein uL13 family. As to quaternary structure, part of the 50S ribosomal subunit.

Functionally, this protein is one of the early assembly proteins of the 50S ribosomal subunit, although it is not seen to bind rRNA by itself. It is important during the early stages of 50S assembly. In Pseudomonas syringae pv. syringae (strain B728a), this protein is Large ribosomal subunit protein uL13.